Here is a 334-residue protein sequence, read N- to C-terminus: N-acetyl-gamma-glutamyl-phosphate reductase (334 aa).

The active site involves cysteine 154.

Belongs to the NAGSA dehydrogenase family. Type 1 subfamily.

The protein resides in the cytoplasm. The catalysed reaction is N-acetyl-L-glutamate 5-semialdehyde + phosphate + NADP(+) = N-acetyl-L-glutamyl 5-phosphate + NADPH + H(+). It functions in the pathway amino-acid biosynthesis; L-arginine biosynthesis; N(2)-acetyl-L-ornithine from L-glutamate: step 3/4. In terms of biological role, catalyzes the NADPH-dependent reduction of N-acetyl-5-glutamyl phosphate to yield N-acetyl-L-glutamate 5-semialdehyde. This chain is N-acetyl-gamma-glutamyl-phosphate reductase, found in Salmonella typhi.